A 325-amino-acid polypeptide reads, in one-letter code: DNA-directed RNA polymerase subunit alpha (325 aa).

Positions 1-231 (MQTSLLKPKI…DQLSVFAALE (231 aa)) are alpha N-terminal domain (alpha-NTD). The segment at 246–325 (IDPILLRPVD…ENWPPAGLDK (80 aa)) is alpha C-terminal domain (alpha-CTD).

The protein belongs to the RNA polymerase alpha chain family. In terms of assembly, homodimer. The RNAP catalytic core consists of 2 alpha, 1 beta, 1 beta' and 1 omega subunit. When a sigma factor is associated with the core the holoenzyme is formed, which can initiate transcription.

The enzyme catalyses RNA(n) + a ribonucleoside 5'-triphosphate = RNA(n+1) + diphosphate. Its function is as follows. DNA-dependent RNA polymerase catalyzes the transcription of DNA into RNA using the four ribonucleoside triphosphates as substrates. The polypeptide is DNA-directed RNA polymerase subunit alpha (Burkholderia mallei (strain NCTC 10247)).